We begin with the raw amino-acid sequence, 189 residues long: Elongation factor P 2 (189 aa).

It belongs to the elongation factor P family.

It is found in the cytoplasm. Its pathway is protein biosynthesis; polypeptide chain elongation. Involved in peptide bond synthesis. Stimulates efficient translation and peptide-bond synthesis on native or reconstituted 70S ribosomes in vitro. Probably functions indirectly by altering the affinity of the ribosome for aminoacyl-tRNA, thus increasing their reactivity as acceptors for peptidyl transferase. This is Elongation factor P 2 from Lactobacillus acidophilus (strain ATCC 700396 / NCK56 / N2 / NCFM).